A 270-amino-acid polypeptide reads, in one-letter code: tRNA pseudouridine synthase A (270 aa).

Catalysis depends on D60, which acts as the Nucleophile. The interval 107 to 111 is RNA binding; the sequence is FHARF. Y118 contacts substrate. The interval 168–172 is interaction with tRNA; the sequence is QCQSR.

This sequence belongs to the tRNA pseudouridine synthase TruA family. In terms of assembly, homodimer.

It carries out the reaction uridine(38/39/40) in tRNA = pseudouridine(38/39/40) in tRNA. Functionally, formation of pseudouridine at positions 38, 39 and 40 in the anticodon stem and loop of transfer RNAs. The protein is tRNA pseudouridine synthase A of Shigella sonnei (strain Ss046).